The following is a 227-amino-acid chain: Urease subunit gamma/beta (227 aa).

The segment at 1–101 is urease gamma; that stretch reads MRLTPTERDR…LAVVTDPIGG (101 aa). The tract at residues 102–227 is urease beta; it reads GLGDQAPGAL…ACGYLGVEQR (126 aa).

This sequence in the N-terminal section; belongs to the urease gamma subunit family. The protein in the C-terminal section; belongs to the urease beta subunit family. As to quaternary structure, heterohexamer of 3 UreC (alpha) and 3 UreAB (gamma/beta) subunits.

The protein localises to the cytoplasm. The enzyme catalyses urea + 2 H2O + H(+) = hydrogencarbonate + 2 NH4(+). It participates in nitrogen metabolism; urea degradation; CO(2) and NH(3) from urea (urease route): step 1/1. The protein is Urease subunit gamma/beta of Streptomyces avermitilis (strain ATCC 31267 / DSM 46492 / JCM 5070 / NBRC 14893 / NCIMB 12804 / NRRL 8165 / MA-4680).